The chain runs to 294 residues: 2-hydroxy-3-oxopropionate reductase (294 aa).

NAD(+)-binding positions include 4-18 (GFIG…MSKN) and Ser95. Lys170 is a catalytic residue. Lys238 is a binding site for NAD(+).

Belongs to the HIBADH-related family. 2-hydroxy-3-oxopropionate reductase subfamily.

It carries out the reaction (R)-glycerate + NADP(+) = 2-hydroxy-3-oxopropanoate + NADPH + H(+). The catalysed reaction is (R)-glycerate + NAD(+) = 2-hydroxy-3-oxopropanoate + NADH + H(+). It functions in the pathway carbohydrate acid metabolism; galactarate degradation; D-glycerate from galactarate: step 3/3. Functionally, catalyzes the reduction of tatronate semialdehyde to D-glycerate. The polypeptide is 2-hydroxy-3-oxopropionate reductase (Escherichia coli O6:H1 (strain CFT073 / ATCC 700928 / UPEC)).